The sequence spans 785 residues: Tripartite terminase subunit 1 (785 aa).

A C3H1-type zinc finger spans residues 201–229 (CAVCFEELCVTANQGATIARRLADRICNH). Residues 439 to 487 (GGATGGAEEEEPRAAAEEGGRRRGAGTPASEDGERGPEPGAQGPESWGD) form a disordered region. Positions 450-459 (PRAAAEEGGR) are enriched in basic and acidic residues. An ATP-binding site is contributed by 696–703 (FASVYRCG).

It belongs to the herpesviridae TRM1 protein family. In terms of assembly, associates with TRM2 and TRM3 to form the tripartite terminase complex. Interacts with portal protein.

It is found in the host nucleus. Component of the molecular motor that translocates viral genomic DNA in empty capsid during DNA packaging. Forms a tripartite terminase complex together with TRM2 and TRM3 in the host cytoplasm. Once the complex reaches the host nucleus, it interacts with the capsid portal vertex. This portal forms a ring in which genomic DNA is translocated into the capsid. TRM1 carries an endonuclease activity that plays an important role for the cleavage of concatemeric viral DNA into unit length genomes. This chain is Tripartite terminase subunit 1, found in Human herpesvirus 2 (strain HG52) (HHV-2).